A 250-amino-acid chain; its full sequence is tRNA (guanine-N(1)-)-methyltransferase (250 aa).

S-adenosyl-L-methionine contacts are provided by residues Gly-113 and 133 to 138; that span reads VGDYVL.

This sequence belongs to the RNA methyltransferase TrmD family. Homodimer.

Its subcellular location is the cytoplasm. It catalyses the reaction guanosine(37) in tRNA + S-adenosyl-L-methionine = N(1)-methylguanosine(37) in tRNA + S-adenosyl-L-homocysteine + H(+). Specifically methylates guanosine-37 in various tRNAs. The chain is tRNA (guanine-N(1)-)-methyltransferase from Proteus mirabilis (strain HI4320).